The primary structure comprises 505 residues: uncharacterized protein (505 aa).

The disordered stretch occupies residues 1-52 (MVDGSIHVPVQSHEGQHDNSSSLNEEIQTSQDPLGIVESYQESSTSDFDKSH). Residues 18–32 (DNSSSLNEEIQTSQD) are compositionally biased toward polar residues. Helical transmembrane passes span 141–161 (FWIV…TNTF), 173–193 (AFQT…YTVF), 208–228 (GWKY…VVLA), 235–255 (LSAS…SFIF), 265–285 (ILGV…DVIS), 290–310 (SAVN…CYGV), 326–346 (VVIG…TFIF), 362–382 (GYLA…PILF), 389–409 (FYNI…IHVF), and 415–435 (WLYP…HVFV). A phosphoserine mark is found at S463, S466, and S467.

It belongs to the SLC35F solute transporter family.

It localises to the golgi apparatus membrane. This is an uncharacterized protein from Schizosaccharomyces pombe (strain 972 / ATCC 24843) (Fission yeast).